Consider the following 229-residue polypeptide: Germin-like protein 3-6 (229 aa).

Residues 1–31 (MEHSFKTIAAGVVIVVLLLQQAPVLIRATDA) form the signal peptide. Cys38 and Cys53 form a disulfide bridge. The Cupin type-1 domain maps to 67–219 (SKIATGGDVN…ALRVDAGVVE (153 aa)). Asn80 and Asn83 each carry an N-linked (GlcNAc...) asparagine glycan. Mn(2+) contacts are provided by His116, His118, Glu123, and His165.

It belongs to the germin family. Oligomer (believed to be a pentamer but probably hexamer).

The protein resides in the secreted. It is found in the extracellular space. It localises to the apoplast. Its function is as follows. May play a role in plant defense. Probably has no oxalate oxidase activity even if the active site is conserved. The chain is Germin-like protein 3-6 from Oryza sativa subsp. japonica (Rice).